Reading from the N-terminus, the 396-residue chain is L-lactate dehydrogenase (396 aa).

Residues 1 to 380 (MIISAASDYR…SGDSLVQELG (380 aa)) enclose the FMN hydroxy acid dehydrogenase domain. Residue Tyr24 coordinates substrate. Positions 106 and 127 each coordinate FMN. Substrate is bound at residue Tyr129. Position 155 (Thr155) interacts with FMN. Position 164 (Arg164) interacts with substrate. Position 251 (Lys251) interacts with FMN. The active-site Proton acceptor is His275. Arg278 contacts substrate. 306–330 (DSGIRNGLDVVRMIALGADTVLLGR) contacts FMN.

The protein belongs to the FMN-dependent alpha-hydroxy acid dehydrogenase family. FMN serves as cofactor.

It localises to the cell inner membrane. The enzyme catalyses (S)-lactate + A = pyruvate + AH2. Catalyzes the conversion of L-lactate to pyruvate. Is coupled to the respiratory chain. This chain is L-lactate dehydrogenase, found in Salmonella schwarzengrund (strain CVM19633).